The following is a 304-amino-acid chain: tRNA dimethylallyltransferase (304 aa).

ATP is bound at residue 2-9 (GPTASGKT). 4 to 9 (TASGKT) serves as a coordination point for substrate. 4 interaction with substrate tRNA regions span residues 27–30 (DSAL), 151–155 (QRINR), 232–237 (RCVGYR), and 265–272 (KRQITWLR).

The protein belongs to the IPP transferase family. As to quaternary structure, monomer. The cofactor is Mg(2+).

The enzyme catalyses adenosine(37) in tRNA + dimethylallyl diphosphate = N(6)-dimethylallyladenosine(37) in tRNA + diphosphate. Its function is as follows. Catalyzes the transfer of a dimethylallyl group onto the adenine at position 37 in tRNAs that read codons beginning with uridine, leading to the formation of N6-(dimethylallyl)adenosine (i(6)A). In Actinobacillus pleuropneumoniae serotype 7 (strain AP76), this protein is tRNA dimethylallyltransferase.